A 504-amino-acid chain; its full sequence is 6,7,8-trihydroxycoumarin synthase (504 aa).

The helical transmembrane segment at 1-21 threads the bilayer; the sequence is MEPVFLFLILAFPIASVYLLF. A substrate specificity region spans residues 363–368; the sequence is PAPVLV. A heme-binding site is contributed by Cys444.

Belongs to the cytochrome P450 family. The cofactor is heme.

It localises to the microsome membrane. It functions in the pathway secondary metabolite biosynthesis. Its function is as follows. Involved in the biosynthesis of coumarins and furanocoumarins (FCs), natural products required for defense responses against attacks by predators with potential medical and agroindustrial usages such as anticoagulant, rodenticide and artificial vanilla substitutes. Able to catalyze the hydroxylation of esculetin to produce 6,7,8-trihydroxycoumarin. The protein is 6,7,8-trihydroxycoumarin synthase of Pastinaca sativa (Wild parsnip).